Reading from the N-terminus, the 98-residue chain is Post-transcriptional regulator ComN (98 aa).

As to quaternary structure, interacts directly with DivIVA.

The protein localises to the cytoplasm. Functionally, required for post-transcription initiation control of the comE operon. Promotes the accumulation of its target comE mRNA to septal and polar sites. The chain is Post-transcriptional regulator ComN (comN) from Bacillus subtilis (strain 168).